The primary structure comprises 703 residues: Zinc finger protein 750 (703 aa).

A CCHC-type zinc finger spans residues 25 to 51 (YKCFQCPFTCNEKSHLFNHMKYGLCKN). Positions 27, 30, 43, and 49 each coordinate Zn(2+). 4 disordered regions span residues 60-96 (DRVP…SGLS), 121-147 (GPHR…EAAV), 362-617 (PSKL…EQKQ), and 633-703 (NVEP…TRVS). A compositionally biased stretch (polar residues) spans 67–78 (KPNSSDPKQTNQ). Residues 79-93 (PDPVVKPTSSKPVPS) are compositionally biased toward low complexity. Residues 375–399 (TELEKQSPTPEAKEPSKDGQRDTEG) are compositionally biased toward basic and acidic residues. A compositionally biased stretch (polar residues) spans 418 to 428 (SPTNFTQTSQP). Residues 583–592 (SSGDGPDPSS) show a composition bias toward low complexity. Over residues 605–616 (QDIRAADSDEQK) the composition is skewed to basic and acidic residues.

The protein localises to the nucleus. Transcription factor involved in epidermis differentiation. Required for terminal epidermal differentiation: acts downstream of p63/TP63 and activates expression of late epidermal differentiation genes. Specifically binds to the promoter of KLF4 and promotes its expression. This chain is Zinc finger protein 750 (ZNF750), found in Bos taurus (Bovine).